Here is a 431-residue protein sequence, read N- to C-terminus: U-box domain-containing protein 20 (431 aa).

Residues 32-106 (TIPSQFQCPI…QGWCGSSLGG (75 aa)) form the U-box domain.

It catalyses the reaction S-ubiquitinyl-[E2 ubiquitin-conjugating enzyme]-L-cysteine + [acceptor protein]-L-lysine = [E2 ubiquitin-conjugating enzyme]-L-cysteine + N(6)-ubiquitinyl-[acceptor protein]-L-lysine.. It functions in the pathway protein modification; protein ubiquitination. In terms of biological role, functions as an E3 ubiquitin ligase. This chain is U-box domain-containing protein 20 (PUB20), found in Arabidopsis thaliana (Mouse-ear cress).